We begin with the raw amino-acid sequence, 608 residues long: MFDAKSFLANVSHDAGVYRMYDEKDTVIYVGKAKDLKKRLSSYFRTHLSSKKTEALVSAIARIDTTITSSETEALLLEHNYIKTYQPRYNVLLRDDKSYPYILLTAERHPRISAYRGSKKIKGEYFGPYPHASAVRETLSLLQKLFPIRQCENAVYNNRSRPCLQYQIGRCAAPCVAGYVTDEAYLQQVELARLFLQGKDQQVLEHLIHKMEQASLALDFEEAARIRDQIQAVRAVMEKQFVSTERLDDMDILSIAYQLGIACVQVLFIRQGKMLGNRSYFPKVPANTTLSELTATFVGQFYLQAHQGRSIPHRIIVDHKLSEKTELEELLTQQAGRKVHIQDNTKGEKSKYLQLAKMNAQSALVTQLKQSTLLKERYQALQAILQLGEIRRMECFDISHTMGEQTIASCVVFNQDGPLKSDYRRFNITGITAGDDYAAMEQALLKRYDKPLEQEKIPDVIFIDGGKGQLNRALQTFSKLNVKWDKNQPHLIGVAKGIDRKAGLETLILSKQGKILHLPSDHLALHLIQHIRDESHQHAISGHRKKRQQAFLQSGLESVEGVGAKRRQTLLKYLGGMQGVKKATLDEIASVPGISKALAERIYDALRD.

Positions 13–91 constitute a GIY-YIG domain; that stretch reads HDAGVYRMYD…IKTYQPRYNV (79 aa). Positions 201–236 constitute a UVR domain; the sequence is QQVLEHLIHKMEQASLALDFEEAARIRDQIQAVRAV.

Belongs to the UvrC family. Interacts with UvrB in an incision complex.

The protein resides in the cytoplasm. In terms of biological role, the UvrABC repair system catalyzes the recognition and processing of DNA lesions. UvrC both incises the 5' and 3' sides of the lesion. The N-terminal half is responsible for the 3' incision and the C-terminal half is responsible for the 5' incision. This is UvrABC system protein C from Pasteurella multocida (strain Pm70).